Here is a 38-residue protein sequence, read N- to C-terminus: Photosystem II reaction center protein L (38 aa).

A helical transmembrane segment spans residues 17-37; that stretch reads SLFWGLLLIFVLAILFSNYFF.

It belongs to the PsbL family. In terms of assembly, PSII is composed of 1 copy each of membrane proteins PsbA, PsbB, PsbC, PsbD, PsbE, PsbF, PsbH, PsbI, PsbJ, PsbK, PsbL, PsbM, PsbT, PsbX, PsbY, PsbZ, Psb30/Ycf12, at least 3 peripheral proteins of the oxygen-evolving complex and a large number of cofactors. It forms dimeric complexes.

It is found in the plastid. The protein resides in the chloroplast thylakoid membrane. Its function is as follows. One of the components of the core complex of photosystem II (PSII). PSII is a light-driven water:plastoquinone oxidoreductase that uses light energy to abstract electrons from H(2)O, generating O(2) and a proton gradient subsequently used for ATP formation. It consists of a core antenna complex that captures photons, and an electron transfer chain that converts photonic excitation into a charge separation. This subunit is found at the monomer-monomer interface and is required for correct PSII assembly and/or dimerization. This chain is Photosystem II reaction center protein L, found in Chara vulgaris (Common stonewort).